Here is a 401-residue protein sequence, read N- to C-terminus: Phosrestin-1 (401 aa).

Ser366 is subject to Phosphoserine; by CaMK.

Belongs to the arrestin family. In terms of processing, phosphorylated upon light exposure. As to expression, expressed in photoreceptor cells.

It localises to the cell projection. The protein localises to the rhabdomere. Regulates photoreceptor cell deactivation. Arr1 and Arr2 proteins are mediators of rhodopsin inactivation and are essential for the termination of the phototransduction cascade. Involved in regulating normal cycles of per nuclear accumulation in brain circadian neurons and thus is important for normal circadian behavior. In the dark, functions with Arr1 to promote the formation of cytosolic Bdbt foci, which are required for dco localization to photoreceptor nuclei where it phosphorylates and activates degradation of per. This Drosophila melanogaster (Fruit fly) protein is Phosrestin-1 (Arr2).